We begin with the raw amino-acid sequence, 378 residues long: Putative glutamate--cysteine ligase 2 (378 aa).

It belongs to the glutamate--cysteine ligase type 2 family. YbdK subfamily.

It catalyses the reaction L-cysteine + L-glutamate + ATP = gamma-L-glutamyl-L-cysteine + ADP + phosphate + H(+). ATP-dependent carboxylate-amine ligase which exhibits weak glutamate--cysteine ligase activity. The chain is Putative glutamate--cysteine ligase 2 from Leifsonia xyli subsp. xyli (strain CTCB07).